We begin with the raw amino-acid sequence, 466 residues long: Cysteine--tRNA ligase (466 aa).

C28 contributes to the Zn(2+) binding site. The short motif at 30–40 (PTVYNYIHIGN) is the 'HIGH' region element. 3 residues coordinate Zn(2+): C208, H233, and E237. Residues 265 to 269 (KMSKS) carry the 'KMSKS' region motif. Position 268 (K268) interacts with ATP.

The protein belongs to the class-I aminoacyl-tRNA synthetase family. As to quaternary structure, monomer. Zn(2+) is required as a cofactor.

The protein localises to the cytoplasm. It carries out the reaction tRNA(Cys) + L-cysteine + ATP = L-cysteinyl-tRNA(Cys) + AMP + diphosphate. This Staphylococcus aureus (strain bovine RF122 / ET3-1) protein is Cysteine--tRNA ligase.